A 122-amino-acid polypeptide reads, in one-letter code: Large ribosomal subunit protein uL14 (122 aa).

Belongs to the universal ribosomal protein uL14 family. As to quaternary structure, part of the 50S ribosomal subunit. Forms a cluster with proteins L3 and L19. In the 70S ribosome, L14 and L19 interact and together make contacts with the 16S rRNA in bridges B5 and B8.

Its function is as follows. Binds to 23S rRNA. Forms part of two intersubunit bridges in the 70S ribosome. This Syntrophotalea carbinolica (strain DSM 2380 / NBRC 103641 / GraBd1) (Pelobacter carbinolicus) protein is Large ribosomal subunit protein uL14.